The following is a 129-amino-acid chain: Small ribosomal subunit protein uS11 (129 aa).

It belongs to the universal ribosomal protein uS11 family. In terms of assembly, part of the 30S ribosomal subunit. Interacts with proteins S7 and S18. Binds to IF-3.

In terms of biological role, located on the platform of the 30S subunit, it bridges several disparate RNA helices of the 16S rRNA. Forms part of the Shine-Dalgarno cleft in the 70S ribosome. The chain is Small ribosomal subunit protein uS11 from Geobacillus kaustophilus (strain HTA426).